Here is a 333-residue protein sequence, read N- to C-terminus: DNA-directed RNA polymerase subunit alpha (333 aa).

Positions 1 to 246 are alpha N-terminal domain (alpha-NTD); the sequence is MEKFIKINWT…AHLNIIGDVN (246 aa). Residues 263 to 333 form an alpha C-terminal domain (alpha-CTD) region; the sequence is HSKTQNILIQ…YNVFLDKGEE (71 aa).

The protein belongs to the RNA polymerase alpha chain family. In terms of assembly, homodimer. The RNAP catalytic core consists of 2 alpha, 1 beta, 1 beta' and 1 omega subunit. When a sigma factor is associated with the core the holoenzyme is formed, which can initiate transcription.

The catalysed reaction is RNA(n) + a ribonucleoside 5'-triphosphate = RNA(n+1) + diphosphate. DNA-dependent RNA polymerase catalyzes the transcription of DNA into RNA using the four ribonucleoside triphosphates as substrates. In Mycoplasma mobile (strain ATCC 43663 / 163K / NCTC 11711) (Mesomycoplasma mobile), this protein is DNA-directed RNA polymerase subunit alpha.